The primary structure comprises 365 residues: tRNA 2-selenouridine synthase (365 aa).

A Rhodanese domain is found at 15 to 138 (LVNDHPIMDA…MRQFLIETID (124 aa)). Cys98 (S-selanylcysteine intermediate) is an active-site residue.

Belongs to the SelU family. In terms of assembly, monomer.

It catalyses the reaction 5-methylaminomethyl-2-thiouridine(34) in tRNA + selenophosphate + (2E)-geranyl diphosphate + H2O + H(+) = 5-methylaminomethyl-2-selenouridine(34) in tRNA + (2E)-thiogeraniol + phosphate + diphosphate. It carries out the reaction 5-methylaminomethyl-2-thiouridine(34) in tRNA + (2E)-geranyl diphosphate = 5-methylaminomethyl-S-(2E)-geranyl-thiouridine(34) in tRNA + diphosphate. The enzyme catalyses 5-methylaminomethyl-S-(2E)-geranyl-thiouridine(34) in tRNA + selenophosphate + H(+) = 5-methylaminomethyl-2-(Se-phospho)selenouridine(34) in tRNA + (2E)-thiogeraniol. The catalysed reaction is 5-methylaminomethyl-2-(Se-phospho)selenouridine(34) in tRNA + H2O = 5-methylaminomethyl-2-selenouridine(34) in tRNA + phosphate. In terms of biological role, involved in the post-transcriptional modification of the uridine at the wobble position (U34) of tRNA(Lys), tRNA(Glu) and tRNA(Gln). Catalyzes the conversion of 2-thiouridine (S2U-RNA) to 2-selenouridine (Se2U-RNA). Acts in a two-step process involving geranylation of 2-thiouridine (S2U) to S-geranyl-2-thiouridine (geS2U) and subsequent selenation of the latter derivative to 2-selenouridine (Se2U) in the tRNA chain. The chain is tRNA 2-selenouridine synthase from Shewanella pealeana (strain ATCC 700345 / ANG-SQ1).